The primary structure comprises 29 residues: Cytochrome b6-f complex subunit 8 (29 aa).

The chain crosses the membrane as a helical span at residues 3-23; the sequence is IVSLGWAFLMVVFSFSLSLVV.

The protein belongs to the PetN family. The 4 large subunits of the cytochrome b6-f complex are cytochrome b6, subunit IV (17 kDa polypeptide, PetD), cytochrome f and the Rieske protein, while the 4 small subunits are PetG, PetL, PetM and PetN. The complex functions as a dimer.

It is found in the plastid. The protein resides in the chloroplast thylakoid membrane. Its function is as follows. Component of the cytochrome b6-f complex, which mediates electron transfer between photosystem II (PSII) and photosystem I (PSI), cyclic electron flow around PSI, and state transitions. The chain is Cytochrome b6-f complex subunit 8 from Chlorokybus atmophyticus (Soil alga).